Consider the following 154-residue polypeptide: MVPPQRAKNDTSSAPDSAAETRGPLVSSGSGLGRRKSATARVYLSPGEGVFVVNGRDINEYFTSKLHRQFACQPLKILDLLGSYDVKVTLHGGGASGQAGAVRLGIARALNTIDPENNRKPLKSAGFLTRDSRVKERKKAGLKKARKAPQYSKR.

2 disordered regions span residues methionine 1–glycine 33 and proline 115–arginine 154. The span at lysine 135–arginine 154 shows a compositional bias: basic residues.

The protein belongs to the universal ribosomal protein uS9 family.

This is Small ribosomal subunit protein uS9 from Tropheryma whipplei (strain TW08/27) (Whipple's bacillus).